The primary structure comprises 205 residues: High frequency lysogenization protein HflD homolog (205 aa).

Belongs to the HflD family.

The protein resides in the cytoplasm. Its subcellular location is the cell inner membrane. In Shewanella baltica (strain OS155 / ATCC BAA-1091), this protein is High frequency lysogenization protein HflD homolog.